Here is a 397-residue protein sequence, read N- to C-terminus: Protein shisa-8 (397 aa).

Residues 1-38 (MARAGARGLLGGRRPPGLRLALALRLALLLARPPSGRA) form the signal peptide. Residues 39–138 (GAPEAQGPAA…APRDPGRERS (100 aa)) lie on the Extracellular side of the membrane. Asn75 is a glycosylation site (N-linked (GlcNAc...) asparagine). The segment at 117–136 (TGRPPARARDTAAPRDPGRE) is disordered. The span at 123–136 (RARDTAAPRDPGRE) shows a compositional bias: basic and acidic residues. The chain crosses the membrane as a helical span at residues 139–159 (HTAVYAVCGVAALLVLAGIGA). Over 160-397 (RLGLERAHSP…RTNSKTEVTV (238 aa)) the chain is Cytoplasmic. Disordered stretches follow at residues 182–250 (LLKQ…GGSL) and 281–303 (FPAL…PDLP). Pro residues-rich tracts occupy residues 188 to 197 (PQEPLPPTLG) and 288 to 303 (PRQP…PDLP).

Belongs to the shisa family. Interacts with AMPAR subunits GRIA1 and GRIA2.

The protein localises to the membrane. Its function is as follows. May regulate trafficking and current kinetics of AMPA-type glutamate receptor (AMPAR) at synapses. This Homo sapiens (Human) protein is Protein shisa-8.